We begin with the raw amino-acid sequence, 95 residues long: Probable FAD-linked sulfhydryl oxidase OPG072 (95 aa).

Residues 1 to 8 (MNPKHWGR) lie on the Intravirion side of the membrane. In terms of domain architecture, ERV/ALR sulfhydryl oxidase spans 1–95 (MNPKHWGRAA…AIDVSKVKPL (95 aa)). A helical transmembrane segment spans residues 9 to 25 (AAWTIIFIVLSQAGLDG). The Virion surface portion of the chain corresponds to 26 to 95 (NIEACKRKLY…AIDVSKVKPL (70 aa)). Cysteines 43 and 46 form a disulfide.

Belongs to the orthopoxvirus OPG072 family. Interacts with OPG128; this interaction involves formation of a transient disulfide-bonded intermediate, allowing disulfide bond transfer. The cofactor is FAD.

The protein localises to the virion membrane. It localises to the host cytoplasm. It catalyses the reaction 2 R'C(R)SH + O2 = R'C(R)S-S(R)CR' + H2O2. In terms of biological role, FAD-dependent sulfhydryl oxidase that catalyzes disulfide bond formation. The complete pathway for formation of disulfide bonds in intracellular virion membrane proteins sequentially involves thiol-disulfide transfer between OPG072, OPG128 and OPG088. This Variola virus (isolate Human/India/Ind3/1967) (VARV) protein is Probable FAD-linked sulfhydryl oxidase OPG072 (OPG072).